We begin with the raw amino-acid sequence, 1375 residues long: DNA-directed RNA polymerase subunit beta (1375 aa).

Belongs to the RNA polymerase beta chain family. The RNAP catalytic core consists of 2 alpha, 1 beta, 1 beta' and 1 omega subunit. When a sigma factor is associated with the core the holoenzyme is formed, which can initiate transcription.

The enzyme catalyses RNA(n) + a ribonucleoside 5'-triphosphate = RNA(n+1) + diphosphate. Its function is as follows. DNA-dependent RNA polymerase catalyzes the transcription of DNA into RNA using the four ribonucleoside triphosphates as substrates. The chain is DNA-directed RNA polymerase subunit beta from Coxiella burnetii (strain Dugway 5J108-111).